A 382-amino-acid polypeptide reads, in one-letter code: Pentraxin-related protein PTX3 (382 aa).

An N-terminal signal peptide occupies residues 1 to 17 (MHISVILFCALWSAVSA). Residues 79–137 (VMLRGELQKLQAELGRLEGSLQKLCGPEAPSETRLARALDDLLQASRDAGRRLARLEDA) adopt a coiled-coil conformation. Disulfide bonds link Cys180/Cys358 and Cys211/Cys272. In terms of domain architecture, Pentraxin (PTX) spans 180-382 (CETAILFPMR…QPHGGAQYVY (203 aa)). Residue Asn221 is glycosylated (N-linked (GlcNAc...) asparagine).

In terms of assembly, homooctamer; disulfide-linked. Binds to C1q.

The protein localises to the secreted. Functionally, plays a role in the regulation of innate resistance to pathogens, inflammatory reactions, possibly clearance of self-components and female fertility. This chain is Pentraxin-related protein PTX3 (PTX3), found in Bos taurus (Bovine).